Here is a 353-residue protein sequence, read N- to C-terminus: Photosystem II protein D1 (353 aa).

Thr-2 bears the N-acetylthreonine mark. Thr-2 carries the post-translational modification Phosphothreonine. A run of 3 helical transmembrane segments spans residues 29 to 46, 118 to 133, and 142 to 156; these read YIGWFGVLMIPTLLTATS, HFLLGVACYMGREWEL, and WIAVAYSAPVAAATA. His-118 is a chlorophyll a binding site. Tyr-126 lines the pheophytin a pocket. Positions 170 and 189 each coordinate [CaMn4O5] cluster. Residues 197 to 218 traverse the membrane as a helical segment; it reads FHMLGVAGVFGGSLFSAMHGSL. His-198 lines the chlorophyll a pocket. Residues His-215 and 264–265 each bind a quinone; that span reads SF. His-215 lines the Fe cation pocket. His-272 is a binding site for Fe cation. Residues 274–288 traverse the membrane as a helical segment; it reads FLAAWPVVGIWFTAL. [CaMn4O5] cluster-binding residues include His-332, Glu-333, Asp-342, and Ala-344. A propeptide spanning residues 345–353 is cleaved from the precursor; the sequence is AIEAPSTNG.

It belongs to the reaction center PufL/M/PsbA/D family. As to quaternary structure, PSII is composed of 1 copy each of membrane proteins PsbA, PsbB, PsbC, PsbD, PsbE, PsbF, PsbH, PsbI, PsbJ, PsbK, PsbL, PsbM, PsbT, PsbX, PsbY, PsbZ, Psb30/Ycf12, at least 3 peripheral proteins of the oxygen-evolving complex and a large number of cofactors. It forms dimeric complexes. Requires The D1/D2 heterodimer binds P680, chlorophylls that are the primary electron donor of PSII, and subsequent electron acceptors. It shares a non-heme iron and each subunit binds pheophytin, quinone, additional chlorophylls, carotenoids and lipids. D1 provides most of the ligands for the Mn4-Ca-O5 cluster of the oxygen-evolving complex (OEC). There is also a Cl(-1) ion associated with D1 and D2, which is required for oxygen evolution. The PSII complex binds additional chlorophylls, carotenoids and specific lipids. as cofactor. In terms of processing, tyr-161 forms a radical intermediate that is referred to as redox-active TyrZ, YZ or Y-Z. C-terminally processed by CTPA; processing is essential to allow assembly of the oxygen-evolving complex and thus photosynthetic growth.

The protein localises to the plastid. It is found in the chloroplast thylakoid membrane. The catalysed reaction is 2 a plastoquinone + 4 hnu + 2 H2O = 2 a plastoquinol + O2. In terms of biological role, photosystem II (PSII) is a light-driven water:plastoquinone oxidoreductase that uses light energy to abstract electrons from H(2)O, generating O(2) and a proton gradient subsequently used for ATP formation. It consists of a core antenna complex that captures photons, and an electron transfer chain that converts photonic excitation into a charge separation. The D1/D2 (PsbA/PsbD) reaction center heterodimer binds P680, the primary electron donor of PSII as well as several subsequent electron acceptors. The chain is Photosystem II protein D1 from Nicotiana debneyi (Debney's tobacco).